Reading from the N-terminus, the 307-residue chain is MINKDIYQALQQLIPNEKIKVDEPLKRYTYTKTGGNADFYITPTKNEEVQAVVKYAYQNEIPVTYLGNGSNIIIREGGIRGIVISLLSLDHIEVSDDAIIAGSGAAIIDVSRVARDYALTGLEFACGIPGSIGGAVYMNAGAYGGEVKDCIDYALCVNEQGSLIKLTTKELELDYRNSIIQKEHLVVLEAAFTLAPGKMTEIQAKMDDLTERRESKQPLEYPSCGSVFQRPPGHFAGKLIQDSNLQGHRIGGVEVSTKHAGFMVNVDNGTATDYENLIHYVQKTVKEKFGIELNREVRIIGEHPKES.

The 165-residue stretch at 33–197 folds into the FAD-binding PCMH-type domain; sequence TGGNADFYIT…LEAAFTLAPG (165 aa). The active site involves Arg-176. Residue Ser-226 is the Proton donor of the active site. Residue Glu-296 is part of the active site.

The protein belongs to the MurB family. It depends on FAD as a cofactor.

The protein resides in the cytoplasm. The catalysed reaction is UDP-N-acetyl-alpha-D-muramate + NADP(+) = UDP-N-acetyl-3-O-(1-carboxyvinyl)-alpha-D-glucosamine + NADPH + H(+). It functions in the pathway cell wall biogenesis; peptidoglycan biosynthesis. In terms of biological role, cell wall formation. The polypeptide is UDP-N-acetylenolpyruvoylglucosamine reductase (Staphylococcus aureus (strain NCTC 8325 / PS 47)).